We begin with the raw amino-acid sequence, 752 residues long: Translation initiation factor IF-2 (752 aa).

The disordered stretch occupies residues 26–167; that stretch reads RQGMGVKSHM…QPTQRKDKPL (142 aa). A compositionally biased stretch (polar residues) spans 34–47; sequence HMSSVTPDQAQQLR. Low complexity predominate over residues 72–81; the sequence is KQNNHQAQNH. Positions 83-96 are enriched in basic and acidic residues; it reads QHHDHDKTQNERPQ. Polar residues predominate over residues 101–129; sequence SRSNNGTKDNNQHQNNGGRFGGSLNNDQG. Residues 131–150 show a composition bias toward basic residues; that stretch reads NGKRFNKKNKKNKKHNKNKR. Basic and acidic residues predominate over residues 151–167; that stretch reads LREVAHKQPTQRKDKPL. In terms of domain architecture, tr-type G spans 253 to 422; the sequence is TRPAVVTVMG…LLQAEMLELK (170 aa). The G1 stretch occupies residues 262 to 269; the sequence is GHVDHGKT. Position 262–269 (262–269) interacts with GTP; that stretch reads GHVDHGKT. A G2 region spans residues 287–291; sequence GITQE. The segment at 308–311 is G3; that stretch reads DTPG. Residues 308–312 and 362–365 contribute to the GTP site; these read DTPGH and NKID. Positions 362–365 are G4; the sequence is NKID. The segment at 398–400 is G5; the sequence is SAK.

It belongs to the TRAFAC class translation factor GTPase superfamily. Classic translation factor GTPase family. IF-2 subfamily.

It localises to the cytoplasm. In terms of biological role, one of the essential components for the initiation of protein synthesis. Protects formylmethionyl-tRNA from spontaneous hydrolysis and promotes its binding to the 30S ribosomal subunits. Also involved in the hydrolysis of GTP during the formation of the 70S ribosomal complex. The sequence is that of Translation initiation factor IF-2 from Limosilactobacillus reuteri (strain DSM 20016) (Lactobacillus reuteri).